The primary structure comprises 331 residues: Ribonuclease Z (331 aa).

The Zn(2+) site is built by H56, H58, D60, H61, H162, D235, and H297. D60 functions as the Proton acceptor in the catalytic mechanism.

The protein belongs to the RNase Z family. As to quaternary structure, homodimer. Zn(2+) is required as a cofactor.

It carries out the reaction Endonucleolytic cleavage of RNA, removing extra 3' nucleotides from tRNA precursor, generating 3' termini of tRNAs. A 3'-hydroxy group is left at the tRNA terminus and a 5'-phosphoryl group is left at the trailer molecule.. Functionally, zinc phosphodiesterase, which displays some tRNA 3'-processing endonuclease activity. Probably involved in tRNA maturation, by removing a 3'-trailer from precursor tRNA. The sequence is that of Ribonuclease Z (rnz) from Deinococcus radiodurans (strain ATCC 13939 / DSM 20539 / JCM 16871 / CCUG 27074 / LMG 4051 / NBRC 15346 / NCIMB 9279 / VKM B-1422 / R1).